Consider the following 123-residue polypeptide: MTDLAKIVEDLSNLTVLEAAELSKMLEEKWGVSAAAPVAVAAAGAAPAAAAEEQTEFDVILAAAGDKKIEVIKEVRAITGLGLKEAKDLVEGAPKTVKEAASKDEAAKIKAQLEKAGAKVELK.

Belongs to the bacterial ribosomal protein bL12 family. In terms of assembly, homodimer. Part of the ribosomal stalk of the 50S ribosomal subunit. Forms a multimeric L10(L12)X complex, where L10 forms an elongated spine to which 2 to 4 L12 dimers bind in a sequential fashion. Binds GTP-bound translation factors.

Its function is as follows. Forms part of the ribosomal stalk which helps the ribosome interact with GTP-bound translation factors. Is thus essential for accurate translation. The protein is Large ribosomal subunit protein bL12 of Parvibaculum lavamentivorans (strain DS-1 / DSM 13023 / NCIMB 13966).